We begin with the raw amino-acid sequence, 449 residues long: Probable glycine dehydrogenase (decarboxylating) subunit 1 (449 aa).

The protein belongs to the GcvP family. N-terminal subunit subfamily. In terms of assembly, the glycine cleavage system is composed of four proteins: P, T, L and H. In this organism, the P 'protein' is a heterodimer of two subunits.

It carries out the reaction N(6)-[(R)-lipoyl]-L-lysyl-[glycine-cleavage complex H protein] + glycine + H(+) = N(6)-[(R)-S(8)-aminomethyldihydrolipoyl]-L-lysyl-[glycine-cleavage complex H protein] + CO2. In terms of biological role, the glycine cleavage system catalyzes the degradation of glycine. The P protein binds the alpha-amino group of glycine through its pyridoxal phosphate cofactor; CO(2) is released and the remaining methylamine moiety is then transferred to the lipoamide cofactor of the H protein. This chain is Probable glycine dehydrogenase (decarboxylating) subunit 1, found in Oceanobacillus iheyensis (strain DSM 14371 / CIP 107618 / JCM 11309 / KCTC 3954 / HTE831).